The sequence spans 86 residues: RNA-binding protein Hfq (86 aa).

The Sm domain occupies 9 to 68 (DPYLNTLRKEKVPVSIYLVNGIKLQGSIESFDQFVVLLKNTVSQMVYKHAISTVVPARPV). The tract at residues 66-86 (RPVRLPSPSDSEHGDSEPGNA) is disordered. Residues 75–86 (DSEHGDSEPGNA) show a composition bias toward basic and acidic residues.

Belongs to the Hfq family. Homohexamer.

RNA chaperone that binds small regulatory RNA (sRNAs) and mRNAs to facilitate mRNA translational regulation in response to envelope stress, environmental stress and changes in metabolite concentrations. Also binds with high specificity to tRNAs. This Pseudomonas putida (strain W619) protein is RNA-binding protein Hfq.